The primary structure comprises 484 residues: Protein nucleotidyltransferase YdiU (484 aa).

The ATP site is built by Gly-81, Gly-83, Arg-84, Lys-103, Asp-115, Gly-116, Arg-166, and Arg-173. Catalysis depends on Asp-244, which acts as the Proton acceptor. Mg(2+) contacts are provided by Asn-245 and Asp-254. Position 254 (Asp-254) interacts with ATP.

This sequence belongs to the SELO family. It depends on Mg(2+) as a cofactor. Requires Mn(2+) as cofactor.

The enzyme catalyses L-seryl-[protein] + ATP = 3-O-(5'-adenylyl)-L-seryl-[protein] + diphosphate. It carries out the reaction L-threonyl-[protein] + ATP = 3-O-(5'-adenylyl)-L-threonyl-[protein] + diphosphate. It catalyses the reaction L-tyrosyl-[protein] + ATP = O-(5'-adenylyl)-L-tyrosyl-[protein] + diphosphate. The catalysed reaction is L-histidyl-[protein] + UTP = N(tele)-(5'-uridylyl)-L-histidyl-[protein] + diphosphate. The enzyme catalyses L-seryl-[protein] + UTP = O-(5'-uridylyl)-L-seryl-[protein] + diphosphate. It carries out the reaction L-tyrosyl-[protein] + UTP = O-(5'-uridylyl)-L-tyrosyl-[protein] + diphosphate. Functionally, nucleotidyltransferase involved in the post-translational modification of proteins. It can catalyze the addition of adenosine monophosphate (AMP) or uridine monophosphate (UMP) to a protein, resulting in modifications known as AMPylation and UMPylation. The sequence is that of Protein nucleotidyltransferase YdiU from Shewanella baltica (strain OS185).